The primary structure comprises 426 residues: Limonoid 21-O-acetyltransferse (426 aa).

Active-site proton acceptor residues include His152 and Asp365.

It belongs to the plant acyltransferase family. In terms of assembly, monomer. Expressed in maturing fruits and in juice vesicles.

It carries out the reaction isomeliandiol + acetyl-CoA = 21-O-acetyl-isomeliandiol + CoA. It participates in secondary metabolite biosynthesis; terpenoid biosynthesis. Its function is as follows. Acetyltransferase involved in the biosynthesis of limonoids triterpene natural products such as limonin, a compound with insecticidal activity responsible for the bitter taste in citrus. Catalyzes the formation of 21-O-acetyl-isomeliandiol from isomeliandiol. The sequence is that of Limonoid 21-O-acetyltransferse from Citrus sinensis (Sweet orange).